An 807-amino-acid polypeptide reads, in one-letter code: Glycerol-3-phosphate acyltransferase (807 aa).

The HXXXXD motif motif lies at 305-310 (CHRSHM).

Belongs to the GPAT/DAPAT family.

The protein resides in the cell inner membrane. The enzyme catalyses sn-glycerol 3-phosphate + an acyl-CoA = a 1-acyl-sn-glycero-3-phosphate + CoA. It participates in phospholipid metabolism; CDP-diacylglycerol biosynthesis; CDP-diacylglycerol from sn-glycerol 3-phosphate: step 1/3. The sequence is that of Glycerol-3-phosphate acyltransferase from Escherichia coli O139:H28 (strain E24377A / ETEC).